We begin with the raw amino-acid sequence, 417 residues long: Imidazolonepropionase (417 aa).

2 residues coordinate Fe(3+): H80 and H82. Residues H80 and H82 each coordinate Zn(2+). 3 residues coordinate 4-imidazolone-5-propanoate: R89, Y152, and H187. Position 152 (Y152) interacts with N-formimidoyl-L-glutamate. H252 serves as a coordination point for Fe(3+). Residue H252 participates in Zn(2+) binding. E255 is a binding site for 4-imidazolone-5-propanoate. D326 provides a ligand contact to Fe(3+). Residue D326 participates in Zn(2+) binding. Positions 328 and 330 each coordinate N-formimidoyl-L-glutamate. S331 contacts 4-imidazolone-5-propanoate.

The protein belongs to the metallo-dependent hydrolases superfamily. HutI family. The cofactor is Zn(2+). It depends on Fe(3+) as a cofactor.

Its subcellular location is the cytoplasm. The catalysed reaction is 4-imidazolone-5-propanoate + H2O = N-formimidoyl-L-glutamate. The protein operates within amino-acid degradation; L-histidine degradation into L-glutamate; N-formimidoyl-L-glutamate from L-histidine: step 3/3. Functionally, catalyzes the hydrolytic cleavage of the carbon-nitrogen bond in imidazolone-5-propanoate to yield N-formimidoyl-L-glutamate. It is the third step in the universal histidine degradation pathway. The protein is Imidazolonepropionase of Bacteroides fragilis (strain ATCC 25285 / DSM 2151 / CCUG 4856 / JCM 11019 / LMG 10263 / NCTC 9343 / Onslow / VPI 2553 / EN-2).